The following is a 358-amino-acid chain: Alanine racemase (358 aa).

The Proton acceptor; specific for D-alanine role is filled by lysine 35. The residue at position 35 (lysine 35) is an N6-(pyridoxal phosphate)lysine. Arginine 130 contacts substrate. The active-site Proton acceptor; specific for L-alanine is the tyrosine 255. Methionine 303 provides a ligand contact to substrate.

The protein belongs to the alanine racemase family. Pyridoxal 5'-phosphate is required as a cofactor.

The catalysed reaction is L-alanine = D-alanine. It participates in amino-acid biosynthesis; D-alanine biosynthesis; D-alanine from L-alanine: step 1/1. Its function is as follows. Catalyzes the interconversion of L-alanine and D-alanine. May also act on other amino acids. This Shewanella sp. (strain MR-7) protein is Alanine racemase (alr).